Here is a 728-residue protein sequence, read N- to C-terminus: Lutropin-choriogonadotropic hormone receptor (728 aa).

Residues 1–19 form the signal peptide; that stretch reads MLPALLPLLLPALLPGAGG. Over 20-389 the chain is Extracellular; that stretch reads GRCPQRCACT…DILGYSFLRV (370 aa). LRR repeat units follow at residues 92 to 116, 117 to 142, 144 to 166, 168 to 191, 193 to 215, and 216 to 239; these read LPAL…AFRN, LPRL…IFSS, AHFI…AFQG, SNES…AFNG, KLNQ…ALRG, and ATGP…GLEA. The helical transmembrane segment at 390–410 threads the bilayer; the sequence is LIWFINILALAGNFIVLLVLI. Residues 411 to 420 lie on the Cytoplasmic side of the membrane; sequence TSHYKLTVPR. The helical transmembrane segment at 421 to 441 threads the bilayer; it reads FLMCNLSFADFCMGLYLLLIA. Topologically, residues 442–466 are extracellular; the sequence is SVDAQTSGQYYNHAIDWQTGSGCST. A disulfide bond links C464 and C539. Residues 467–487 form a helical membrane-spanning segment; that stretch reads AGFFTVFASELSVYTLTVITI. Over 488–507 the chain is Cytoplasmic; the sequence is ERWHTITYAMQLDRKLRLRH. Residues 508–528 traverse the membrane as a helical segment; sequence AVPIMLGGWVFSILIAVLPLL. The Extracellular segment spans residues 529 to 551; it reads GVSSYMKVSICLPMDIETGLSQA. Residues 552–572 traverse the membrane as a helical segment; that stretch reads YILLILMLNVIAFLVICACYI. The Cytoplasmic portion of the chain corresponds to 573–595; the sequence is KIYVAVQNPELVAANKDTKIAKR. Residues 596–616 form a helical membrane-spanning segment; it reads MAILIFTDFTCMAPISFFAIS. Over 617–630 the chain is Extracellular; that stretch reads AAIKVPLITVTNSK. A helical membrane pass occupies residues 631–651; it reads ILLVLFYPVNSCANPFLYAIF. Residues 652 to 728 are Cytoplasmic-facing; it reads TKAFQRDFFL…STKKSQPECQ (77 aa).

Belongs to the G-protein coupled receptor 1 family. FSH/LSH/TSH subfamily. As to expression, expressed in ovarian follicle granulosa cells. Expressed in ovarian follicle theca cells.

The protein localises to the cell membrane. Functionally, receptor for lutropin-choriogonadotropic hormone. The activity of this receptor is mediated by G proteins which activate adenylate cyclase. The polypeptide is Lutropin-choriogonadotropic hormone receptor (Gallus gallus (Chicken)).